Consider the following 131-residue polypeptide: NADH dehydrogenase [ubiquinone] 1 alpha subcomplex subunit 6 (131 aa).

The protein belongs to the complex I LYR family. Mammalian complex I is composed of 45 different subunits.

It localises to the mitochondrion inner membrane. In terms of biological role, accessory subunit of the mitochondrial membrane respiratory chain NADH dehydrogenase (Complex I), that is believed to be not involved in catalysis. Required for proper complex I assembly. Complex I functions in the transfer of electrons from NADH to the respiratory chain. The immediate electron acceptor for the enzyme is believed to be ubiquinone. The sequence is that of NADH dehydrogenase [ubiquinone] 1 alpha subcomplex subunit 6 from Mus musculus (Mouse).